The primary structure comprises 351 residues: Photosystem II D2 protein (351 aa).

The chain crosses the membrane as a helical span at residues 39 to 59 (TAYLAAGGWFTGTTFVTSWYT). Histidine 116 serves as a coordination point for chlorophyll a. A helical membrane pass occupies residues 123-139 (GFCLRQFEIARLVGIRP). Glutamine 128 and asparagine 141 together coordinate pheophytin a. Residues 151–164 (VFVSVFLLYPLGQA) traverse the membrane as a helical segment. Histidine 196 is a binding site for chlorophyll a. The chain crosses the membrane as a helical span at residues 206–226 (GALLCAIHGATVENTLFEDGD). The a plastoquinone site is built by histidine 213 and phenylalanine 260. Histidine 213 is a Fe cation binding site. Histidine 267 contacts Fe cation. Residues 277–293 (GLWTSSIGIVGLALNLR) traverse the membrane as a helical segment.

The protein belongs to the reaction center PufL/M/PsbA/D family. As to quaternary structure, PSII is composed of 1 copy each of membrane proteins PsbA, PsbB, PsbC, PsbD, PsbE, PsbF, PsbH, PsbI, PsbJ, PsbK, PsbL, PsbM, PsbT, PsbX, PsbY, PsbZ, Psb30/Ycf12, at least 3 peripheral proteins of the oxygen-evolving complex and a large number of cofactors. It forms dimeric complexes. Requires The D1/D2 heterodimer binds P680, chlorophylls that are the primary electron donor of PSII, and subsequent electron acceptors. It shares a non-heme iron and each subunit binds pheophytin, quinone, additional chlorophylls, carotenoids and lipids. There is also a Cl(-1) ion associated with D1 and D2, which is required for oxygen evolution. The PSII complex binds additional chlorophylls, carotenoids and specific lipids. as cofactor.

The protein resides in the plastid. The protein localises to the chloroplast thylakoid membrane. It catalyses the reaction 2 a plastoquinone + 4 hnu + 2 H2O = 2 a plastoquinol + O2. Photosystem II (PSII) is a light-driven water:plastoquinone oxidoreductase that uses light energy to abstract electrons from H(2)O, generating O(2) and a proton gradient subsequently used for ATP formation. It consists of a core antenna complex that captures photons, and an electron transfer chain that converts photonic excitation into a charge separation. The D1/D2 (PsbA/PsbD) reaction center heterodimer binds P680, the primary electron donor of PSII as well as several subsequent electron acceptors. D2 is needed for assembly of a stable PSII complex. The polypeptide is Photosystem II D2 protein (Thalassiosira pseudonana (Marine diatom)).